Here is a 123-residue protein sequence, read N- to C-terminus: Small ribosomal subunit protein uS12 (123 aa).

Asp-89 is subject to 3-methylthioaspartic acid.

The protein belongs to the universal ribosomal protein uS12 family. Part of the 30S ribosomal subunit. Contacts proteins S8 and S17. May interact with IF1 in the 30S initiation complex.

With S4 and S5 plays an important role in translational accuracy. In terms of biological role, interacts with and stabilizes bases of the 16S rRNA that are involved in tRNA selection in the A site and with the mRNA backbone. Located at the interface of the 30S and 50S subunits, it traverses the body of the 30S subunit contacting proteins on the other side and probably holding the rRNA structure together. The combined cluster of proteins S8, S12 and S17 appears to hold together the shoulder and platform of the 30S subunit. The protein is Small ribosomal subunit protein uS12 of Afipia carboxidovorans (strain ATCC 49405 / DSM 1227 / KCTC 32145 / OM5) (Oligotropha carboxidovorans).